Here is a 164-residue protein sequence, read N- to C-terminus: Lipoprotein signal peptidase (164 aa).

Transmembrane regions (helical) follow at residues 12 to 32, 70 to 90, and 102 to 122; these read WLWL…LILQ, WFFA…MYRS, and ALII…GFVV. Residues aspartate 123 and aspartate 141 contribute to the active site. A helical membrane pass occupies residues 137 to 157; sequence FNLADTAICVGAALIVLEGFL.

This sequence belongs to the peptidase A8 family.

It is found in the cell inner membrane. It carries out the reaction Release of signal peptides from bacterial membrane prolipoproteins. Hydrolyzes -Xaa-Yaa-Zaa-|-(S,diacylglyceryl)Cys-, in which Xaa is hydrophobic (preferably Leu), and Yaa (Ala or Ser) and Zaa (Gly or Ala) have small, neutral side chains.. Its pathway is protein modification; lipoprotein biosynthesis (signal peptide cleavage). Functionally, this protein specifically catalyzes the removal of signal peptides from prolipoproteins. The protein is Lipoprotein signal peptidase of Escherichia coli O157:H7.